The sequence spans 202 residues: LexA repressor (202 aa).

The H-T-H motif DNA-binding region spans 29-49 (VREICEATGLKSTSTVHGHLT). Catalysis depends on for autocatalytic cleavage activity residues S126 and K163.

Belongs to the peptidase S24 family. Homodimer.

It carries out the reaction Hydrolysis of Ala-|-Gly bond in repressor LexA.. In terms of biological role, represses a number of genes involved in the response to DNA damage (SOS response), including recA and lexA. In the presence of single-stranded DNA, RecA interacts with LexA causing an autocatalytic cleavage which disrupts the DNA-binding part of LexA, leading to derepression of the SOS regulon and eventually DNA repair. This chain is LexA repressor, found in Caldicellulosiruptor saccharolyticus (strain ATCC 43494 / DSM 8903 / Tp8T 6331).